A 1898-amino-acid chain; its full sequence is Receptor-type tyrosine-protein phosphatase F (1898 aa).

The N-terminal stretch at 1-29 is a signal peptide; that stretch reads MAPEPAPGRRMVPLVPALVMLGLMAGAHG. The Extracellular segment spans residues 30 to 1254; sequence DSKPVFVKVP…QQQEEPEMLW (1225 aa). 3 Ig-like C2-type domains span residues 33 to 123, 135 to 224, and 232 to 314; these read PVFV…AKLS, PTID…ANLY, and PRFS…AQVT. A disulfide bond links cysteine 54 and cysteine 107. 68–77 is a heparin binding site; the sequence is KKGKKVSSQR. N-linked (GlcNAc...) asparagine glycosylation occurs at asparagine 117. A disulfide bridge links cysteine 156 with cysteine 207. N-linked (GlcNAc...) asparagine glycosylation is found at asparagine 250 and asparagine 295. Cysteine 253 and cysteine 298 are joined by a disulfide. 8 Fibronectin type-III domains span residues 321-411, 416-510, 514-604, 609-706, 711-810, 811-905, 909-1001, and 1005-1089; these read PPID…TGEQ, PPRR…TQQG, QPAD…TAQS, PPQK…TDED, PPRK…TTGA, VPGR…PEDA, FPQN…TMPM, and FAKN…TAPD. Positions 693 to 713 are disordered; the sequence is GPESSPVLVRTDEDVPSGPPR. A glycan (N-linked (GlcNAc...) asparagine) is linked at asparagine 721. N-linked (GlcNAc...) asparagine glycans are attached at residues asparagine 941 and asparagine 957. The chain crosses the membrane as a helical span at residues 1255-1275; sequence VTGPVLAVILIILIVIAILLF. Topologically, residues 1276–1898 are cytoplasmic; sequence KRKRTHSPSS…YLGSFDHYAT (623 aa). A Phosphoserine modification is found at serine 1296. 2 Tyrosine-protein phosphatase domains span residues 1343 to 1598 and 1630 to 1889; these read FSQE…LLEA and MELE…ALEY. Substrate is bound by residues aspartate 1507, 1539-1545, and glutamine 1583; that span reads CSAGVGR. The Phosphocysteine intermediate role is filled by cysteine 1539. Catalysis depends on cysteine 1830, which acts as the Phosphocysteine intermediate.

Belongs to the protein-tyrosine phosphatase family. Receptor class 2A subfamily. In terms of assembly, interacts with GRIP1. Interacts with PPFIA1, PPFIA2 and PPFIA3. Interacts with PTPRF.

Its subcellular location is the membrane. The catalysed reaction is O-phospho-L-tyrosyl-[protein] + H2O = L-tyrosyl-[protein] + phosphate. Its function is as follows. Possible cell adhesion receptor. It possesses an intrinsic protein tyrosine phosphatase activity (PTPase) and dephosphorylates EPHA2 regulating its activity. Functionally, the first PTPase domain has enzymatic activity, while the second one seems to affect the substrate specificity of the first one. The sequence is that of Receptor-type tyrosine-protein phosphatase F (Ptprf) from Rattus norvegicus (Rat).